We begin with the raw amino-acid sequence, 72 residues long: UPF0270 protein Ent638_3781 (72 aa).

This sequence belongs to the UPF0270 family.

This chain is UPF0270 protein Ent638_3781, found in Enterobacter sp. (strain 638).